Reading from the N-terminus, the 315-residue chain is Porphobilinogen deaminase (315 aa).

The residue at position 234 (C234) is an S-(dipyrrolylmethanemethyl)cysteine.

This sequence belongs to the HMBS family. In terms of assembly, monomer. It depends on dipyrromethane as a cofactor.

The catalysed reaction is 4 porphobilinogen + H2O = hydroxymethylbilane + 4 NH4(+). It participates in porphyrin-containing compound metabolism; protoporphyrin-IX biosynthesis; coproporphyrinogen-III from 5-aminolevulinate: step 2/4. In terms of biological role, tetrapolymerization of the monopyrrole PBG into the hydroxymethylbilane pre-uroporphyrinogen in several discrete steps. The protein is Porphobilinogen deaminase of Mycobacterium avium (strain 104).